The chain runs to 375 residues: MKWLSRILTVIVAMSMACGALIFNRRHQLKAKTLNFNHKSLTIIIPARNEEKRIGHLLHSIIQQQVPVDVIVMNDGSTDETARVARSYGATVVDVVDDADGKWYGKSHACYQGVTHACTNRIAFVDADVTFLRKDAVETLINQYQLQGEKGLLSVQPYHITKRFYEGFSAIFNLMTVVGMNVFSTLDDGRTNQHAFGPVTLTNKEDYYATGGHKSANRHIIEGFALGSAYTSQSLPVTVYEGFPFVAFCMYQEGFQSLQEGWTKHLSTGAGGTKPKIMAAIVLWLFGSIASILGLCLSLKYRQMSVGKMLTVYLSYTTQFIYLHRRVGQFSNLLMVCHPLLFMFFTKIFIQSWKQTHRYGVVEWKGRQYSISKEQ.

Transmembrane regions (helical) follow at residues 3–23 (WLSR…ALIF), 164–184 (FYEG…NVFS), 277–297 (IMAA…GLCL), and 330–350 (FSNL…KIFI).

This sequence belongs to the glycosyltransferase 2 family. CrtQ subfamily.

It is found in the cell membrane. The protein operates within carotenoid biosynthesis; staphyloxanthin biosynthesis; staphyloxanthin from farnesyl diphosphate: step 4/5. Functionally, catalyzes the glycosylation of 4,4'-diaponeurosporenoate, i.e. the esterification of glucose at the C1'' position with the carboxyl group of 4,4'-diaponeurosporenic acid, to form glycosyl-4,4'-diaponeurosporenoate. This is a step in the biosynthesis of staphyloxanthin, an orange pigment present in most staphylococci strains. In Staphylococcus aureus (strain bovine RF122 / ET3-1), this protein is 4,4'-diaponeurosporenoate glycosyltransferase (crtQ).